We begin with the raw amino-acid sequence, 859 residues long: Collagen alpha-1(II) chain (859 aa).

Positions 1–607 (LQGLPGKDGE…LGQTEKGPDP (607 aa)) are disordered. P31 and P40 each carry 4-hydroxyproline. The residue at position 42 (P42) is a 3-hydroxyproline. 4-hydroxyproline is present on residues P43 and P46. The span at 78-121 (ERGSPGAQGLQGPRGLPGTPGTDGPKGATGPAGPNGAQGPPGLQ) shows a compositional bias: low complexity. A compositionally biased stretch (basic and acidic residues) spans 136–147 (KGDRGDVGEKGP). Composition is skewed to low complexity over residues 204–220 (PAGF…PGAK) and 249–277 (PTGV…AGRV). P279 is modified (3-hydroxyproline). The span at 279–292 (PPGPNGNPGPPGPP) shows a compositional bias: pro residues. Residues P280, P286, and P292 each carry the 4-hydroxyproline modification. The span at 306–321 (DAGPPGRAGDPGLQGP) shows a compositional bias: low complexity. Basic and acidic residues predominate over residues 487 to 501 (RGDKGETGEAGERGL). Residues 491 to 586 (GETGEAGERG…PGPPGPPGPP (96 aa)) are triple-helical region. P516 is subject to 3-hydroxyproline. Low complexity predominate over residues 520–529 (SGDQGAAGPA). 4-hydroxyproline is present on P553. P558 carries the 3-hydroxyproline modification. P559 is subject to 4-hydroxyproline. Residues 570–586 (PAGPPGNPGPPGPPGPP) show a composition bias toward pro residues. The residue at position 573 (P573) is a 3-hydroxyproline. 4-hydroxyproline occurs at positions 574 and 577. At P579 the chain carries 3-hydroxyproline. 4-hydroxyproline occurs at positions 580 and 583. At P585 the chain carries 3-hydroxyproline. 4-hydroxyproline is present on P586. The tract at residues 587 to 613 (GTGIDMSAFAGLGQTEKGPDPIRYMRA) is nonhelical region (C-terminal). Residues 614-859 (DEAAGGLRQH…GVDIGPVCFL (246 aa)) constitute a propeptide, C-terminal propeptide. Residues 625-859 (VEVDATLKSL…GVDIGPVCFL (235 aa)) enclose the Fibrillar collagen NC1 domain. Disulfide bonds link C655–C687, C695–C857, and C765–C810. Residues D673, N675, Q676, C678, and D681 each contribute to the Ca(2+) site. A glycan (N-linked (GlcNAc...) asparagine) is linked at N760.

Belongs to the fibrillar collagen family. Homotrimers of alpha 1(II) chains. In terms of processing, contains mostly 4-hydroxyproline. Prolines at the third position of the tripeptide repeating unit (G-X-P) are 4-hydroxylated in some or all of the chains. Post-translationally, contains 3-hydroxyproline at a few sites. This modification occurs on the first proline residue in the sequence motif Gly-Pro-Hyp, where Hyp is 4-hydroxyproline. Lysine residues at the third position of the tripeptide repeating unit (G-X-Y) are 5-hydroxylated in some or all of the chains. In terms of processing, O-glycosylated on hydroxylated lysine residues. The O-linked glycan consists of a Glc-Gal disaccharide.

The protein resides in the secreted. The protein localises to the extracellular space. It localises to the extracellular matrix. Type II collagen is specific for cartilaginous tissues. It is essential for the normal embryonic development of the skeleton, for linear growth and for the ability of cartilage to resist compressive forces. The sequence is that of Collagen alpha-1(II) chain from Gallus gallus (Chicken).